Reading from the N-terminus, the 102-residue chain is NADH-quinone oxidoreductase subunit K (102 aa).

Transmembrane regions (helical) follow at residues 6 to 26, 30 to 50, and 64 to 84; these read LGQGLLLAAILFALGLVGVLV, LLFMLMSLEVMLNAAGVAFIV, and FILVLTLAAAEVSVGLALILL.

It belongs to the complex I subunit 4L family. In terms of assembly, NDH-1 is composed of 14 different subunits. Subunits NuoA, H, J, K, L, M, N constitute the membrane sector of the complex.

It is found in the cell inner membrane. It catalyses the reaction a quinone + NADH + 5 H(+)(in) = a quinol + NAD(+) + 4 H(+)(out). Its function is as follows. NDH-1 shuttles electrons from NADH, via FMN and iron-sulfur (Fe-S) centers, to quinones in the respiratory chain. The immediate electron acceptor for the enzyme in this species is believed to be ubiquinone. Couples the redox reaction to proton translocation (for every two electrons transferred, four hydrogen ions are translocated across the cytoplasmic membrane), and thus conserves the redox energy in a proton gradient. This chain is NADH-quinone oxidoreductase subunit K, found in Acidiphilium cryptum (strain JF-5).